The chain runs to 379 residues: Alcohol dehydrogenase 1 (379 aa).

Positions 47, 49, 69, 99, 102, 105, 113, and 177 each coordinate Zn(2+). 2 residues coordinate an alcohol: T49 and H69. T49 contributes to the NAD(+) binding site. NAD(+) is bound by residues 202–207, D226, R231, T272, V295, 295–297, F322, and R372; these read GLGAVG and VGV.

This sequence belongs to the zinc-containing alcohol dehydrogenase family. As to quaternary structure, homodimer. Zn(2+) is required as a cofactor.

It localises to the cytoplasm. The enzyme catalyses a primary alcohol + NAD(+) = an aldehyde + NADH + H(+). It catalyses the reaction a secondary alcohol + NAD(+) = a ketone + NADH + H(+). The protein is Alcohol dehydrogenase 1 (ADH1) of Hordeum vulgare (Barley).